The sequence spans 622 residues: C6 finger transcription factor fumR (622 aa).

Residues 94–123 (CDRCHGQKLRCRRENNSDTCVRCARAGVRC) constitute a DNA-binding region (zn(2)-C6 fungal-type). Disordered regions lie at residues 127-175 (PMRL…HSDH), 206-248 (ALTA…APNL), 299-360 (FDQA…SNSI), and 556-585 (PATG…DAGD). Composition is skewed to polar residues over residues 148–167 (PANG…GPND), 217–226 (VHTSQPSGPQ), and 347–360 (RGNS…SNSI). Over residues 556–571 (PATGSASKTAASGPPA) the composition is skewed to low complexity.

It localises to the nucleus. In terms of biological role, transcription factor that regulates the expression of the gene clusters that mediate the biosynthesis of pseurotin and fumagillin. This chain is C6 finger transcription factor fumR, found in Aspergillus fumigatus (strain ATCC MYA-4609 / CBS 101355 / FGSC A1100 / Af293) (Neosartorya fumigata).